The primary structure comprises 444 residues: Protein-serine O-palmitoleoyltransferase porcupine (444 aa).

Transmembrane regions (helical) follow at residues 29 to 49 (NGTL…FLVW), 81 to 101 (VMIF…KLNG), 128 to 150 (FLTL…FAIV), 163 to 183 (TLYL…YVTF), 201 to 221 (LGVF…AIIS), 249 to 269 (YFIC…IVVA), 304 to 324 (FFQS…LLHA), 326 to 346 (DYQM…ETVF), 383 to 403 (VLII…FTGM), and 420 to 440 (WTIW…FLAL). The active site involves H323.

It belongs to the membrane-bound acyltransferase family. Porcupine subfamily.

The protein localises to the membrane. The enzyme catalyses [Wnt protein]-L-serine + (9Z)-hexadecenoyl-CoA = [Wnt protein]-O-(9Z)-hexadecenoyl-L-serine + CoA. Its function is as follows. Key regulator of the Wnt signaling pathway that mediates lipid modification of Wnt proteins. Acts as a protein-serine O-palmitoleoyltransferase that catalyzes the attachment of palmitoleate, a 16-carbon monounsaturated fatty acid (C16:1(9Z)), to Wnt proteins. Serine palmitoleoylation of WNT proteins is required for efficient binding to frizzled receptors. Has a role in cell specification, specifically in blastomere signaling. Involved in cytosketetal polarity. Required for the orientation of mitotic spindle axis. The polypeptide is Protein-serine O-palmitoleoyltransferase porcupine (Caenorhabditis briggsae).